The chain runs to 910 residues: Triacylglycerol lipase 4 (910 aa).

Positions 51 to 66 (SKDNSDVERVEEDAGK) are enriched in basic and acidic residues. The disordered stretch occupies residues 51 to 120 (SKDNSDVERV…TDEGEDERQG (70 aa)). Residue serine 55 is modified to Phosphoserine. The span at 70–85 (TGKNKTTNKVNFNLDT) shows a compositional bias: polar residues. The segment covering 90-116 (KLDDDQETVTENENNDIEMVETDEGED) has biased composition (acidic residues). A PNPLA domain is found at 282 to 483 (LVLSGGGTFG…DNDLPISRLS (202 aa)). The GXGXXG motif lies at 286-291 (GGGTFG). A GXSXG motif is present at residues 313-317 (GSSAG). Residue serine 315 is the Nucleophile of the active site. Aspartate 470 acts as the Proton acceptor in catalysis. Disordered stretches follow at residues 657–683 (EQTSDESKNPENSTLLTRTPTKGDNHI) and 713–777 (SPSG…PILQ). Residues 666–683 (PENSTLLTRTPTKGDNHI) are compositionally biased toward polar residues. Residue threonine 675 is modified to Phosphothreonine; by Cdk1. A phosphoserine mark is found at serine 737, serine 749, serine 751, and serine 836. Residues 739–768 (TISTSRRPAKSFSFSVASPTSRMLRQSSKI) show a composition bias toward polar residues. The tract at residues 874 to 910 (RRHSIDGRPPSQATKSSPFRSRPSSSTQHKSTTSFTQ) is disordered. Positions 889-899 (SSPFRSRPSSS) are enriched in low complexity. The residue at position 890 (serine 890) is a Phosphoserine; by Cdk1. Over residues 900-910 (TQHKSTTSFTQ) the composition is skewed to polar residues.

Phosphorylation at Thr-675 and Ser-890 by Cdk1/CDC28 stimulates enzyme activity in vivo.

It localises to the lipid droplet. The catalysed reaction is a triacylglycerol + H2O = a diacylglycerol + a fatty acid + H(+). It catalyses the reaction 1,2,3-tri-(9Z-octadecenoyl)-glycerol + H2O = di-(9Z)-octadecenoylglycerol + (9Z)-octadecenoate + H(+). The enzyme catalyses 1,2-dihexadecanoyl-sn-glycero-3-phosphocholine + H2O = 1-hexadecanoyl-sn-glycero-3-phosphocholine + hexadecanoate + H(+). It carries out the reaction cholesteryl (9Z-octadecenoate) + H2O = cholesterol + (9Z)-octadecenoate + H(+). The catalysed reaction is 1-(9Z-octadecenoyl)-sn-glycero-3-phosphate + (9Z)-octadecenoyl-CoA = 1,2-di-(9Z-octadecenoyl)-sn-glycero-3-phosphate + CoA. Its activity is regulated as follows. Phosphorylated and activated by cyclin-dependent kinase 1 (Cdk1/CDC28). Loses its lipolytic activity in cells lacking nonpolar lipids, but retains its side activity as lysophospholipid acyltransferase. Functionally, lipid particle-localized triacylglycerol (TAG) lipase. The lipid droplet/particle is a lipid storage compartment which serves as a depot of energy and building blocks for membrane lipid biosynthesis. Involved in the mobilization of the non-polar storage lipids triacylglycerols (TAGs) from lipid particles by hydrolysis of TAGs, releasing and supplying specific fatty acids to the appropriate metabolic pathways. Also has steryl ester (SE) hydrolase and phospholipase A(2) (PLA(2)) activities, and catalyzes the acylation of lysophosphatidic acid (LPA). Contributes to early bud formation in late G1 phase of the cell cycle upon phosphorylation and activation by cyclin-dependent kinase 1 (Cdk1/CDC28). The protein is Triacylglycerol lipase 4 (TGL4) of Saccharomyces cerevisiae (strain ATCC 204508 / S288c) (Baker's yeast).